Reading from the N-terminus, the 130-residue chain is MAATQYYGTGRRKTSTARVFAKVGTGNIVVNQLPLDQYFGRETSRMVVRQPLELVEMTDKLDIFVTVKGGGNTGQAGAIRHGITRALMELDESLRPSLRAAGFVTRDARKVERKKVGLRKARRKPQFSKR.

Belongs to the universal ribosomal protein uS9 family.

The polypeptide is Small ribosomal subunit protein uS9 (Shewanella sediminis (strain HAW-EB3)).